We begin with the raw amino-acid sequence, 87 residues long: Small ribosomal subunit protein bS18 (87 aa).

This sequence belongs to the bacterial ribosomal protein bS18 family. In terms of assembly, part of the 30S ribosomal subunit. Forms a tight heterodimer with protein bS6.

Binds as a heterodimer with protein bS6 to the central domain of the 16S rRNA, where it helps stabilize the platform of the 30S subunit. This is Small ribosomal subunit protein bS18 from Nitratidesulfovibrio vulgaris (strain ATCC 29579 / DSM 644 / CCUG 34227 / NCIMB 8303 / VKM B-1760 / Hildenborough) (Desulfovibrio vulgaris).